A 202-amino-acid polypeptide reads, in one-letter code: UMP-CMP kinase 3 (202 aa).

24-29 contacts ATP; the sequence is GSGKGT. The NMP stretch occupies residues 44–73; that stretch reads SAGDLLRAEIKSGSENGTMIQNMIKEGKIV. A ribonucleoside 5'-phosphate-binding positions include Arg50, 71 to 73, and 98 to 101; these read KIV and GFPR. Position 105 (Asn105) interacts with CMP. Residues 136 to 144 are LID; the sequence is GRNQGREDD. Position 137 (Arg137) interacts with ATP. Arg141 and Arg152 together coordinate a ribonucleoside 5'-phosphate. Residue Lys180 participates in ATP binding.

In terms of assembly, monomer. Requires Mg(2+) as cofactor.

The protein localises to the cytoplasm. It is found in the nucleus. It catalyses the reaction CMP + ATP = CDP + ADP. The catalysed reaction is dCMP + ATP = dCDP + ADP. It carries out the reaction UMP + ATP = UDP + ADP. Its function is as follows. Catalyzes the phosphorylation of pyrimidine nucleoside monophosphates at the expense of ATP. Plays an important role in de novo pyrimidine nucleotide biosynthesis. Has preference for UMP and CMP as phosphate acceptors. Does not act on dCMP and dUMP. This chain is UMP-CMP kinase 3 (UMK3), found in Arabidopsis thaliana (Mouse-ear cress).